The primary structure comprises 63 residues: Cecropin-A1 (63 aa).

An N-terminal signal peptide occupies residues 1-23 (MKFYNIFVFVALILAITIGQSEA). Residue arginine 62 is modified to Arginine amide.

This sequence belongs to the cecropin family.

It localises to the secreted. Cecropins have lytic and antibacterial activity against several Gram-positive and Gram-negative bacteria. This chain is Cecropin-A1 (CecA1), found in Drosophila mauritiana (Fruit fly).